A 263-amino-acid polypeptide reads, in one-letter code: Lysine 5,6-aminomutase beta subunit (263 aa).

A B12-binding domain is found at 120–259; the sequence is EVVMVGASTG…TFILKEMVQR (140 aa). Residues 130–136 and His133 each bind adenosylcob(III)alamin; that span reads TDAHTVG. At Lys144 the chain carries N6-(pyridoxal phosphate)lysine. Residues 185-192, 219-223, and 239-244 contribute to the adenosylcob(III)alamin site; these read LVSQTVTQ, IAGGA, and FGPGKY.

The protein belongs to the KamE family. In terms of assembly, heterotetramer of 2 alpha and 2 beta subunits. Adenosylcob(III)alamin is required as a cofactor. Pyridoxal 5'-phosphate serves as cofactor.

The catalysed reaction is (3S)-3,6-diaminohexanoate = (3S,5S)-3,5-diaminohexanoate. The enzyme catalyses D-lysine = (2R,5S)-2,5-diaminohexanoate. It participates in amino-acid degradation; L-lysine degradation via acetate pathway. In terms of biological role, catalyzes the migration of the L-beta-lysine and D-lysine epsilon amino group to the delta carbon to produce 3,5-diaminohexanoate and 2,5-diaminohexanoate, respectively. This is Lysine 5,6-aminomutase beta subunit from Fusobacterium nucleatum subsp. nucleatum (strain ATCC 25586 / DSM 15643 / BCRC 10681 / CIP 101130 / JCM 8532 / KCTC 2640 / LMG 13131 / VPI 4355).